The chain runs to 307 residues: Streptomycin 6-kinase (307 aa).

133–145 (LAGLLNRLHSVPA) serves as a coordination point for streptomycin. Residue Asp201 is the Proton acceptor of the active site.

The protein belongs to the aminoglycoside phosphotransferase family.

It carries out the reaction streptomycin + ATP = streptomycin 6-phosphate + ADP + H(+). Its function is as follows. The aminoglycoside phosphotransferases achieve inactivation of their antibiotic substrates by phosphorylation. This is Streptomycin 6-kinase (aphD) from Streptomyces griseus.